Consider the following 428-residue polypeptide: Elongation factor 1-alpha (428 aa).

The tr-type G domain maps to 5 to 215; sequence KPHVNIVFIG…ALDQIPEPPK (211 aa). The tract at residues 14–21 is G1; it reads GHVDHGKS. 14-21 contributes to the GTP binding site; sequence GHVDHGKS. S21 lines the Mg(2+) pocket. The interval 68–72 is G2; that stretch reads GITID. The interval 89-92 is G3; that stretch reads DAPG. Residues 89–93 and 144–147 each bind GTP; these read DAPGH and NKMD. A G4 region spans residues 144–147; it reads NKMD. The interval 181 to 183 is G5; the sequence is SAW.

Belongs to the TRAFAC class translation factor GTPase superfamily. Classic translation factor GTPase family. EF-Tu/EF-1A subfamily.

Its subcellular location is the cytoplasm. The catalysed reaction is GTP + H2O = GDP + phosphate + H(+). Its function is as follows. GTP hydrolase that promotes the GTP-dependent binding of aminoacyl-tRNA to the A-site of ribosomes during protein biosynthesis. The polypeptide is Elongation factor 1-alpha (Thermococcus onnurineus (strain NA1)).